The primary structure comprises 236 residues: Biosynthetic peptidoglycan transglycosylase (236 aa).

The chain crosses the membrane as a helical span at residues 12–31; it reads ALLWFAAGSALVVLVLRWVP.

Belongs to the glycosyltransferase 51 family.

It is found in the cell inner membrane. It catalyses the reaction [GlcNAc-(1-&gt;4)-Mur2Ac(oyl-L-Ala-gamma-D-Glu-L-Lys-D-Ala-D-Ala)](n)-di-trans,octa-cis-undecaprenyl diphosphate + beta-D-GlcNAc-(1-&gt;4)-Mur2Ac(oyl-L-Ala-gamma-D-Glu-L-Lys-D-Ala-D-Ala)-di-trans,octa-cis-undecaprenyl diphosphate = [GlcNAc-(1-&gt;4)-Mur2Ac(oyl-L-Ala-gamma-D-Glu-L-Lys-D-Ala-D-Ala)](n+1)-di-trans,octa-cis-undecaprenyl diphosphate + di-trans,octa-cis-undecaprenyl diphosphate + H(+). The protein operates within cell wall biogenesis; peptidoglycan biosynthesis. In terms of biological role, peptidoglycan polymerase that catalyzes glycan chain elongation from lipid-linked precursors. This chain is Biosynthetic peptidoglycan transglycosylase, found in Pseudomonas syringae pv. tomato (strain ATCC BAA-871 / DC3000).